The primary structure comprises 90 residues: Carboxysome shell vertex protein CsoS4A (90 aa).

Positions 1–78 constitute a BMV domain; that stretch reads MKIYKVDKTL…SDLTIVGIID (78 aa).

Belongs to the CcmL/EutN family. CsoS4 subfamily. Homopentamer.

It is found in the carboxysome. Probably forms vertices in the carboxysome, a polyhedral inclusion where RuBisCO (ribulose bisphosphate carboxylase, cbbL-cbbS) is sequestered. Has been modeled to induce curvature upon insertion into an otherwise flat hexagonal layer of major carboxysome subunits. In Hydrogenovibrio crunogenus (strain DSM 25203 / XCL-2) (Thiomicrospira crunogena), this protein is Carboxysome shell vertex protein CsoS4A.